A 155-amino-acid polypeptide reads, in one-letter code: MNIKIVCFGKLDKKFFIDSFNEYANRISKYANLQVIELKEEYQKEDVVNKNINSDLLIDKLKAFSDHEIICMDVSSKNYSTEEFMSIIENNKNLKQAKIVFVIGPSDGFSDKFLQQNYKKVSFGNITLPHQLFRIILAEQIYRAFKIMNNEKYHK.

Residues glycine 104 and phenylalanine 123–leucine 128 each bind S-adenosyl-L-methionine.

It belongs to the RNA methyltransferase RlmH family. As to quaternary structure, homodimer.

The protein resides in the cytoplasm. The catalysed reaction is pseudouridine(1915) in 23S rRNA + S-adenosyl-L-methionine = N(3)-methylpseudouridine(1915) in 23S rRNA + S-adenosyl-L-homocysteine + H(+). Specifically methylates the pseudouridine at position 1915 (m3Psi1915) in 23S rRNA. This Mesoplasma florum (strain ATCC 33453 / NBRC 100688 / NCTC 11704 / L1) (Acholeplasma florum) protein is Ribosomal RNA large subunit methyltransferase H.